The chain runs to 395 residues: Digeranylgeranylglycerophospholipid reductase (395 aa).

Residues Ala-15, Asp-34, Cys-45, Ala-46, Gly-48, Arg-97, Ala-121, Asp-276, and Gly-288 each coordinate FAD. The a 2,3-bis-O-(geranylgeranyl)-sn-glycerol 1-phospholipid site is built by Arg-329 and Gly-365.

The protein belongs to the geranylgeranyl reductase family. DGGGPL reductase subfamily. It depends on FAD as a cofactor.

It carries out the reaction a 2,3-bis-O-phytanyl-sn-glycerol 1-phospholipid + 8 A = a 2,3-bis-O-(geranylgeranyl)-sn-glycerol 1-phospholipid + 8 AH2. The enzyme catalyses 2,3-bis-O-(phytanyl)-sn-glycerol 1-phosphate + 8 A = 2,3-bis-O-(geranylgeranyl)-sn-glycerol 1-phosphate + 8 AH2. It catalyses the reaction CDP-2,3-bis-O-(geranylgeranyl)-sn-glycerol + 8 AH2 = CDP-2,3-bis-O-(phytanyl)-sn-glycerol + 8 A. The catalysed reaction is archaetidylserine + 8 AH2 = 2,3-bis-O-phytanyl-sn-glycero-3-phospho-L-serine + 8 A. Its pathway is membrane lipid metabolism; glycerophospholipid metabolism. Is involved in the reduction of 2,3-digeranylgeranylglycerophospholipids (unsaturated archaeols) into 2,3-diphytanylglycerophospholipids (saturated archaeols) in the biosynthesis of archaeal membrane lipids. Catalyzes the formation of archaetidic acid (2,3-di-O-phytanyl-sn-glyceryl phosphate) from 2,3-di-O-geranylgeranylglyceryl phosphate (DGGGP) via the hydrogenation of each double bond of the isoprenoid chains. Is also probably able to reduce double bonds of geranyl groups in CDP-2,3-bis-O-(geranylgeranyl)-sn-glycerol and archaetidylserine, thus acting at various stages in the biosynthesis of archaeal membrane lipids. In Thermococcus gammatolerans (strain DSM 15229 / JCM 11827 / EJ3), this protein is Digeranylgeranylglycerophospholipid reductase.